The primary structure comprises 160 residues: Cytochrome b6-f complex subunit 4 (160 aa).

Helical transmembrane passes span 36 to 56 (LLYM…GLAV), 95 to 115 (LLGV…PFIE), and 131 to 151 (TVFL…TLPI).

This sequence belongs to the cytochrome b family. PetD subfamily. As to quaternary structure, the 4 large subunits of the cytochrome b6-f complex are cytochrome b6, subunit IV (17 kDa polypeptide, petD), cytochrome f and the Rieske protein, while the 4 small subunits are petG, petL, petM and petN. The complex functions as a dimer.

The protein localises to the plastid. The protein resides in the chloroplast thylakoid membrane. Functionally, component of the cytochrome b6-f complex, which mediates electron transfer between photosystem II (PSII) and photosystem I (PSI), cyclic electron flow around PSI, and state transitions. This Coleochaete orbicularis (Charophycean green alga) protein is Cytochrome b6-f complex subunit 4.